Reading from the N-terminus, the 359-residue chain is Alanine racemase, biosynthetic (359 aa).

Catalysis depends on Lys34, which acts as the Proton acceptor; specific for D-alanine. Lys34 carries the post-translational modification N6-(pyridoxal phosphate)lysine. N6-carboxylysine is present on Lys122. A substrate-binding site is contributed by Arg129. The active-site Proton acceptor; specific for L-alanine is Tyr255. Residue Met303 coordinates substrate.

Belongs to the alanine racemase family. As to quaternary structure, homodimer. Pyridoxal 5'-phosphate serves as cofactor.

It carries out the reaction L-alanine = D-alanine. It participates in amino-acid biosynthesis; D-alanine biosynthesis; D-alanine from L-alanine: step 1/1. Its pathway is cell wall biogenesis; peptidoglycan biosynthesis. In terms of biological role, catalyzes the interconversion of L-alanine and D-alanine. Provides the D-alanine required for cell wall biosynthesis. In Escherichia coli (strain K12), this protein is Alanine racemase, biosynthetic.